The sequence spans 169 residues: MIAVYPGSFDPITLGHLDVIERGCKLFETVVVAVSKNPNKIPLFTVEQRIQQIRTCTLHLANVEIDAFHGLTVSYAKMRQAQVLLRGLRAVSDFEYELQMAHTNKSLYPQIETVFLTTANEYSFLSSSQVKEIARFGGSVAHLVPANVAIDLEKCFAQTPTVSTPIAQD.

A substrate-binding site is contributed by S8. ATP contacts are provided by residues 8–9 and H16; that span reads SF. Residues K40, T72, and R86 each contribute to the substrate site. ATP is bound by residues 87–89, E97, and 122–128; these read GLR and YSFLSSS.

This sequence belongs to the bacterial CoaD family. As to quaternary structure, homohexamer. The cofactor is Mg(2+).

The protein localises to the cytoplasm. It carries out the reaction (R)-4'-phosphopantetheine + ATP + H(+) = 3'-dephospho-CoA + diphosphate. It functions in the pathway cofactor biosynthesis; coenzyme A biosynthesis; CoA from (R)-pantothenate: step 4/5. Its function is as follows. Reversibly transfers an adenylyl group from ATP to 4'-phosphopantetheine, yielding dephospho-CoA (dPCoA) and pyrophosphate. The sequence is that of Phosphopantetheine adenylyltransferase from Cyanothece sp. (strain PCC 7425 / ATCC 29141).